Reading from the N-terminus, the 177-residue chain is Translation initiation factor IF-3 (177 aa).

Belongs to the IF-3 family. As to quaternary structure, monomer.

It is found in the cytoplasm. In terms of biological role, IF-3 binds to the 30S ribosomal subunit and shifts the equilibrium between 70S ribosomes and their 50S and 30S subunits in favor of the free subunits, thus enhancing the availability of 30S subunits on which protein synthesis initiation begins. This Nostoc sp. (strain PCC 7120 / SAG 25.82 / UTEX 2576) protein is Translation initiation factor IF-3.